The following is a 123-amino-acid chain: Cysteine-rich DPF motif domain-containing protein 1 (123 aa).

The segment at 102–123 (RQDLEKRKAPSKRTPSQPGSRT) is disordered. Positions 114 to 123 (RTPSQPGSRT) are enriched in polar residues.

This sequence belongs to the CDPF1 family.

The chain is Cysteine-rich DPF motif domain-containing protein 1 (CDPF1) from Homo sapiens (Human).